The primary structure comprises 372 residues: UDP-N-acetylglucosamine--N-acetylmuramyl-(pentapeptide) pyrophosphoryl-undecaprenol N-acetylglucosamine transferase (372 aa).

Residues 10–12 (TGG), Asn-124, Arg-166, Ser-196, Ile-256, and Gln-301 contribute to the UDP-N-acetyl-alpha-D-glucosamine site.

The protein belongs to the glycosyltransferase 28 family. MurG subfamily.

Its subcellular location is the cell membrane. The catalysed reaction is di-trans,octa-cis-undecaprenyl diphospho-N-acetyl-alpha-D-muramoyl-L-alanyl-D-glutamyl-meso-2,6-diaminopimeloyl-D-alanyl-D-alanine + UDP-N-acetyl-alpha-D-glucosamine = di-trans,octa-cis-undecaprenyl diphospho-[N-acetyl-alpha-D-glucosaminyl-(1-&gt;4)]-N-acetyl-alpha-D-muramoyl-L-alanyl-D-glutamyl-meso-2,6-diaminopimeloyl-D-alanyl-D-alanine + UDP + H(+). Its pathway is cell wall biogenesis; peptidoglycan biosynthesis. Cell wall formation. Catalyzes the transfer of a GlcNAc subunit on undecaprenyl-pyrophosphoryl-MurNAc-pentapeptide (lipid intermediate I) to form undecaprenyl-pyrophosphoryl-MurNAc-(pentapeptide)GlcNAc (lipid intermediate II). This is UDP-N-acetylglucosamine--N-acetylmuramyl-(pentapeptide) pyrophosphoryl-undecaprenol N-acetylglucosamine transferase from Desulforamulus reducens (strain ATCC BAA-1160 / DSM 100696 / MI-1) (Desulfotomaculum reducens).